A 527-amino-acid chain; its full sequence is Catalase (527 aa).

Residues 1-22 (MSDSRDPASDQMKQWKEQRASQ) show a composition bias toward basic and acidic residues. Positions 1–34 (MSDSRDPASDQMKQWKEQRASQRPDVLTTGGGNP) are disordered. At Ser2 the chain carries N-acetylserine. Residue Ser9 is modified to Phosphoserine. Lys13 is subject to N6-succinyllysine. Position 21 is a phosphoserine (Ser21). Catalysis depends on residues His75 and Asn148. NADP(+)-binding residues include His194, Ser201, Arg203, and Asn213. Lys221 bears the N6-succinyllysine mark. Position 233 is an N6-acetyllysine (Lys233). 4 residues coordinate NADP(+): Lys237, Trp303, His305, and Lys306. Lys306 carries the N6-acetyllysine; alternate modification. The residue at position 306 (Lys306) is an N6-succinyllysine; alternate. A heme-binding site is contributed by Tyr358. Phosphoserine is present on residues Ser417 and Ser422. Residue Lys430 is modified to N6-acetyllysine; alternate. Lys430 is subject to N6-succinyllysine; alternate. A Phosphoserine modification is found at Ser434. N6-acetyllysine; alternate is present on residues Lys449 and Lys480. N6-succinyllysine; alternate is present on residues Lys449 and Lys480. Lys499 carries the post-translational modification N6-acetyllysine. A Phosphothreonine modification is found at Thr511. A Phosphoserine modification is found at Ser517. N6-succinyllysine is present on Lys522. The Microbody targeting signal; atypical signature appears at 524-527 (KANL).

Belongs to the catalase family. In terms of assembly, homotetramer. Interacts (via microbody targeting signal) with PEX5, monomeric form interacts with PEX5, leading to its translocation into peroxisomes. It depends on heme as a cofactor. NADP(+) is required as a cofactor.

Its subcellular location is the peroxisome matrix. It carries out the reaction 2 H2O2 = O2 + 2 H2O. Functionally, catalyzes the degradation of hydrogen peroxide (H(2)O(2)) generated by peroxisomal oxidases to water and oxygen, thereby protecting cells from the toxic effects of hydrogen peroxide. Promotes growth of cells including T-cells, B-cells, myeloid leukemia cells, melanoma cells, mastocytoma cells and normal and transformed fibroblast cells. This chain is Catalase (Cat), found in Mus musculus (Mouse).